Here is a 382-residue protein sequence, read N- to C-terminus: Glycerate kinase (382 aa).

This sequence belongs to the glycerate kinase type-1 family.

It catalyses the reaction (R)-glycerate + ATP = (2R)-3-phosphoglycerate + ADP + H(+). The polypeptide is Glycerate kinase (glxK) (Bacillus subtilis (strain 168)).